We begin with the raw amino-acid sequence, 382 residues long: Glutaminyl-peptide cyclotransferase-like protein (382 aa).

Residues 35–55 (LLPLLLALAVGSAFYTIWSGW) traverse the membrane as a helical segment. A disulfide bridge connects residues Cys167 and Cys191. Asp186 contacts Zn(2+). Glu225 functions as the Proton acceptor in the catalytic mechanism. Glu226 provides a ligand contact to Zn(2+). The active-site Proton acceptor is Asp269. Residue His351 coordinates Zn(2+).

This sequence belongs to the glutaminyl-peptide cyclotransferase family.

It is found in the golgi apparatus membrane. It catalyses the reaction N-terminal L-glutaminyl-[peptide] = N-terminal 5-oxo-L-prolyl-[peptide] + NH4(+). Responsible for the biosynthesis of pyroglutamyl peptides. In Homo sapiens (Human), this protein is Glutaminyl-peptide cyclotransferase-like protein (QPCTL).